The primary structure comprises 245 residues: Probable phosphatase PC1_1798 (245 aa).

Residues histidine 7, histidine 9, histidine 15, histidine 40, glutamate 73, histidine 101, histidine 131, aspartate 192, and histidine 194 each coordinate Zn(2+).

Belongs to the PHP family. As to quaternary structure, homotrimer. The cofactor is Zn(2+).

This Pectobacterium carotovorum subsp. carotovorum (strain PC1) protein is Probable phosphatase PC1_1798.